The chain runs to 243 residues: Orotidine 5'-phosphate decarboxylase (243 aa).

Substrate is bound by residues aspartate 19, lysine 41, 69–78, threonine 124, arginine 185, glutamine 194, glycine 214, and arginine 215; that span reads DLKFFDIPAT. The active-site Proton donor is lysine 71.

This sequence belongs to the OMP decarboxylase family. Type 1 subfamily. As to quaternary structure, homodimer.

It catalyses the reaction orotidine 5'-phosphate + H(+) = UMP + CO2. It participates in pyrimidine metabolism; UMP biosynthesis via de novo pathway; UMP from orotate: step 2/2. In terms of biological role, catalyzes the decarboxylation of orotidine 5'-monophosphate (OMP) to uridine 5'-monophosphate (UMP). In Xanthomonas euvesicatoria pv. vesicatoria (strain 85-10) (Xanthomonas campestris pv. vesicatoria), this protein is Orotidine 5'-phosphate decarboxylase.